The following is a 534-amino-acid chain: Zinc finger protein 703-A (534 aa).

3 disordered regions span residues 1–35 (MNCS…THPV), 90–251 (SQIG…VAPV), and 300–320 (QLPG…LTGA). Composition is skewed to low complexity over residues 15–34 (QSSS…PTHP), 115–124 (RSSSLKLGES), and 146–155 (GSSAGGSADK). Residues 173-182 (SPSSRVSSPG) show a composition bias toward polar residues. Over residues 185-200 (CDSKNNESQEKKEPEA) the composition is skewed to basic and acidic residues. Positions 204–217 (SLETSQANPTLTRA) are enriched in polar residues. Over residues 218 to 229 (SISNSSAESSQS) the composition is skewed to low complexity. Residues 230–239 (GDVTPSSKSD) show a composition bias toward polar residues. A C2H2-type zinc finger spans residues 406–434 (HICNWVSASGPCDKRFATSEELLAHLRTH).

Belongs to the Elbow/Noc family.

It localises to the nucleus. The protein resides in the cytoplasm. Transcriptional corepressor which does not bind directly to DNA and may regulate transcription through recruitment of histone deacetylases to gene promoters. Regulates cell adhesion, migration and proliferation. Involved in specification of the lateral neural plate border (NPB). May be required for segmental gene expression during hindbrain development. The sequence is that of Zinc finger protein 703-A (znf703-a) from Xenopus laevis (African clawed frog).